A 402-amino-acid chain; its full sequence is TBC1 domain family member 20 (402 aa).

The interval M1–K27 is disordered. Residues R14–A26 are compositionally biased toward basic and acidic residues. The region spanning L59–H245 is the Rab-GAP TBC domain. A run of 2 helical transmembrane segments spans residues L237–V257 and F366–V386.

It is found in the membrane. Functionally, GTPase-activating protein specific for Rab1 and Rab2 small GTPase families for which it can accelerate the intrinsic GTP hydrolysis rate by more than five orders of magnitude. Also shows GAP activity for RAB18 GTPase. Promotes RAB18 dissociation from the endoplasmic reticulum (ER) membrane into the cytosol, probably through stimulating RAB18 GTP-hydrolysis. Involved in maintaining endoplasmic reticulum structure. The protein is TBC1 domain family member 20 of Mus musculus (Mouse).